Consider the following 239-residue polypeptide: Protein UL20 homolog (239 aa).

Helical transmembrane passes span 65–81, 140–156, and 189–208; these read PSFSAHVVLFAISALVI, FVIGCMALGRTVAFMVV, and LMPLISVRSAVCLVIISTAV.

It belongs to the alphaherpesvirinae UL20 family. In terms of assembly, interacts with gK (via N-terminus); this interaction plays a role in the coordinate transport of UL20 and gK to the trans-Golgi network (TGN), and is required for their cell surface expression. Interacts with gB.

The protein localises to the virion. Its subcellular location is the host cell membrane. The protein resides in the host endosome membrane. It is found in the host Golgi apparatus membrane. It localises to the host nucleus membrane. Functionally, plays an essential role in egress of virus particles from the nucleus, cytoplasmic envelopment and virus-induced cell fusion. Forms a functional protein complex with gK and this interaction is absolutely essential for their coordinate intracellular transport, gK glycosylation, expression on host cell surface, and function. Together, they modulate gB-mediated virus-induced cell fusion and virion egress and therefore actively participate in these processes. The protein is Protein UL20 homolog of Equus caballus (Horse).